A 33-amino-acid polypeptide reads, in one-letter code: Phosphoglycerate kinase (33 aa).

K13 contacts AMP. K13 is an ATP binding site.

It belongs to the phosphoglycerate kinase family. As to quaternary structure, monomer. Requires Mg(2+) as cofactor.

The enzyme catalyses (2R)-3-phosphoglycerate + ATP = (2R)-3-phospho-glyceroyl phosphate + ADP. The chain is Phosphoglycerate kinase from Pseudotsuga menziesii (Douglas-fir).